A 1183-amino-acid polypeptide reads, in one-letter code: DNA-directed RNA polymerase subunit beta (1183 aa).

This sequence belongs to the RNA polymerase beta chain family. The RNAP catalytic core consists of 2 alpha, 1 beta, 1 beta' and 1 omega subunit. When a sigma factor is associated with the core the holoenzyme is formed, which can initiate transcription.

The catalysed reaction is RNA(n) + a ribonucleoside 5'-triphosphate = RNA(n+1) + diphosphate. Functionally, DNA-dependent RNA polymerase catalyzes the transcription of DNA into RNA using the four ribonucleoside triphosphates as substrates. The chain is DNA-directed RNA polymerase subunit beta from Staphylococcus aureus (strain Mu3 / ATCC 700698).